The following is a 226-amino-acid chain: Putative methyltransferase RP459 (226 aa).

This sequence belongs to the methyltransferase superfamily.

This is Putative methyltransferase RP459 from Rickettsia prowazekii (strain Madrid E).